A 139-amino-acid chain; its full sequence is MNKKVIYFLCTGNSCRSQMAEGWGKKYLGDEWDVYSAGIEAHGVNPNAVKAMKEIGIDISEQTSDTIDQELLQKADLVVTLCGHAADVCPATPSNKERVHWGFDDPAKAEGTDEEKWAVFRRVRDEIGKRIKTFAETGK.

Residues Cys-10, Cys-82, and Cys-89 each act as nucleophile in the active site. Disulfide bonds link Cys-10–Cys-82 and Cys-82–Cys-89.

This sequence belongs to the low molecular weight phosphotyrosine protein phosphatase family. Thioredoxin-coupled ArsC subfamily.

The protein resides in the cytoplasm. The enzyme catalyses arsenate + [thioredoxin]-dithiol + H(+) = arsenite + [thioredoxin]-disulfide + H2O. Functionally, catalyzes the reduction of arsenate [As(V)] to arsenite [As(III)]. The protein is Arsenate reductase of Halalkalibacterium halodurans (strain ATCC BAA-125 / DSM 18197 / FERM 7344 / JCM 9153 / C-125) (Bacillus halodurans).